Consider the following 668-residue polypeptide: Neurexin-3-beta (668 aa).

A signal peptide spans 1-35 (MHLRTNPSICPGRRPAWTLWMCSLFWGCIVSSVWS). Over 36 to 593 (SSNVASSASS…EVVRESSSTT (558 aa)) the chain is Extracellular. In terms of domain architecture, Laminin G-like spans 84–284 (ATYIFGKSGG…NPNIKINGSV (201 aa)). Positions 510–529 (TASSSTGMVPKLPAGKMNNR) are disordered. The chain crosses the membrane as a helical span at residues 594 to 614 (GMVVGIVAAAALCILILLYAM). Over 615 to 668 (YKYRNRDEGSYQVDETRNYISNSAQSNGTLMKEKQQSSKSGHKKQKNKDKEYYV) the chain is Cytoplasmic. The disordered stretch occupies residues 636 to 668 (NSAQSNGTLMKEKQQSSKSGHKKQKNKDKEYYV).

It belongs to the neurexin family. Post-translationally, processed by alpha-secretase leading to the formation of an extracellular soluble protein as well as a C-terminal membrane-embedded fragment (CTF). Proteolysis of these CTFs by gamma-secretase releases intracellular domains (ICDs) and extracellular peptides. In terms of tissue distribution, brain and arteries (at protein level).

It localises to the membrane. Functionally, neuronal cell surface protein that may be involved in cell recognition and cell adhesion. Plays a role in angiogenesis. This Gallus gallus (Chicken) protein is Neurexin-3-beta (NRXN3).